Reading from the N-terminus, the 118-residue chain is MATDTGSGRGKGGKGVTLGKGSKGAKASKGGKRIRTKTQQDALKGITKPAIRRLARRGGVKRINGAVYDETRNVLKQFLEQVIRDSVTYTEHAKRRTVTAMDVVYALKRQGRTLYGYS.

The segment at 1–39 (MATDTGSGRGKGGKGVTLGKGSKGAKASKGGKRIRTKTQ) is disordered. A compositionally biased stretch (gly residues) spans 7-22 (SGRGKGGKGVTLGKGS).

Belongs to the histone H4 family. In terms of assembly, the nucleosome is a histone octamer containing two molecules each of H2A, H2B, H3 and H4 assembled in one H3-H4 heterotetramer and two H2A-H2B heterodimers. The octamer wraps approximately 147 bp of DNA.

The protein localises to the nucleus. Its subcellular location is the chromosome. In terms of biological role, core component of nucleosome. Nucleosomes wrap and compact DNA into chromatin, limiting DNA accessibility to the cellular machineries which require DNA as a template. Histones thereby play a central role in transcription regulation, DNA repair, DNA replication and chromosomal stability. DNA accessibility is regulated via a complex set of post-translational modifications of histones, also called histone code, and nucleosome remodeling. The protein is Histone H4 of Entamoeba histolytica (strain ATCC 30459 / HM-1:IMSS / ABRM).